The chain runs to 277 residues: Undecaprenyl-diphosphatase (277 aa).

Transmembrane regions (helical) follow at residues Trp5–Ile25, Arg44–Phe64, Leu86–Ile106, Leu110–Ala130, Ala184–Ser204, Val219–Leu239, and Ile255–Ala275.

It belongs to the UppP family.

The protein localises to the cell inner membrane. It catalyses the reaction di-trans,octa-cis-undecaprenyl diphosphate + H2O = di-trans,octa-cis-undecaprenyl phosphate + phosphate + H(+). Functionally, catalyzes the dephosphorylation of undecaprenyl diphosphate (UPP). Confers resistance to bacitracin. This is Undecaprenyl-diphosphatase from Pseudomonas savastanoi pv. phaseolicola (strain 1448A / Race 6) (Pseudomonas syringae pv. phaseolicola (strain 1448A / Race 6)).